An 876-amino-acid chain; its full sequence is MIKSTAEVRQAFLDFFATKQHQIVKSSSLVPGNDATLLFTNAGMVPFKDVFLGAETRSYTRATSAQRCVRAGGKHNDLENVGYTARHHTFFEMMGNFSFGDYFKNDAISYAWEFLTGELGLAKEKLLVTVYATDEEAFSYWRDEVGVPEDKIIRIGDKSANKKYESDNFWSMGDTGPCGPCSEIFYDHGEDIFGGPPGSPDEDGDRFIEIWNIVFMQFNRQSDGRMDPLPNPSIDTGMGLERISAIMQNVHSNYEIDIFQALIKDTAALLDCSDLEHKSLRVIGDHIRSCSFLIVDGVVPSNEGRGYVLRRIIRRAIRHGHKLEATGHFFHKLVASLIAQMGEAYPELAQQQAIIEKLLRIEEEQFGRTLDRGMILLEDILANLSGDIIKGDDVFKLYDTYGFPADLTADIARERNLKIDKDGFDVAMKQQRERAQQASQFGTDYNQQLKSDQNTAFKGYDNDSYSATVVELFNSQDQDPVSQLNSGEQGIVILDHTPFYAESGGQVGDSGLLHLDGGVFEVTDTIKLGNAFAHRGTAHTDVGLNRRVKAEINVERRAAIVKNHTATHLLHEALRKVLGEHVTQKGSLCDSDKLRFDFSHFEGVTAQELHDVEQMVNNEIRRNHAKQTESMYIEEAKAKGAMALFGEKYDDEVRVVTLGDFSIELCGGVHVNRTGDIGFLKIVSESGIAAGVRRIEAVTGTGALDFINQQTASLTTIAALVKSDVTNASSKVELLISRSKQLEKEIGQLKQELAAQAGSDLVNNTIEINGVKVLIADLGSVESKALRGMVDELKNKMQSGVIMLATANGPKVGLIAGVTKDLVGRVKAGDLVNMVAQQVGGKGGGRPDMAQAGGSQPENITSALESVSAWLTEKLA.

The Zn(2+) site is built by H564, H568, C666, and H670.

This sequence belongs to the class-II aminoacyl-tRNA synthetase family. It depends on Zn(2+) as a cofactor.

It is found in the cytoplasm. The enzyme catalyses tRNA(Ala) + L-alanine + ATP = L-alanyl-tRNA(Ala) + AMP + diphosphate. In terms of biological role, catalyzes the attachment of alanine to tRNA(Ala) in a two-step reaction: alanine is first activated by ATP to form Ala-AMP and then transferred to the acceptor end of tRNA(Ala). Also edits incorrectly charged Ser-tRNA(Ala) and Gly-tRNA(Ala) via its editing domain. This chain is Alanine--tRNA ligase, found in Colwellia psychrerythraea (strain 34H / ATCC BAA-681) (Vibrio psychroerythus).